An 87-amino-acid chain; its full sequence is Exendin-3 (87 aa).

A signal peptide spans 1–21 (MKIILWLCVFGLFLATLFPVS). A propeptide spanning residues 22–45 (WQMPVESGLSSEDSASSESFASKI) is cleaved from the precursor. Position 86 is a serine amide (Ser-86).

The protein belongs to the glucagon family. As to expression, expressed by the venom gland.

It is found in the secreted. Functionally, stimulates vasoactive intestinal peptide (VIP) receptors in high concentrations (&gt;100 nM), resulting in both an increase in cAMP and amylase secretion from pancreatic acini, although at low concentrations (between 0.3 and 3 nM) it increases cAMP without stimulating amylase release. Stimulates the GLP-1 receptor (GLP1R). Induces hypotension that is mediated by relaxation of cardiac smooth muscle. This is Exendin-3 from Heloderma horridum horridum (Mexican beaded lizard).